The following is a 281-amino-acid chain: Shikimate dehydrogenase (NADP(+)) (281 aa).

Shikimate contacts are provided by residues 14–16 (SKS) and threonine 61. Lysine 65 acts as the Proton acceptor in catalysis. Shikimate contacts are provided by asparagine 86 and aspartate 105. Residues 130 to 134 (GAGGA), 154 to 159 (NRTAAK), and methionine 221 each bind NADP(+). Tyrosine 223 is a shikimate binding site. Glycine 245 is a binding site for NADP(+).

Belongs to the shikimate dehydrogenase family. As to quaternary structure, homodimer.

It catalyses the reaction shikimate + NADP(+) = 3-dehydroshikimate + NADPH + H(+). It functions in the pathway metabolic intermediate biosynthesis; chorismate biosynthesis; chorismate from D-erythrose 4-phosphate and phosphoenolpyruvate: step 4/7. Functionally, involved in the biosynthesis of the chorismate, which leads to the biosynthesis of aromatic amino acids. Catalyzes the reversible NADPH linked reduction of 3-dehydroshikimate (DHSA) to yield shikimate (SA). The chain is Shikimate dehydrogenase (NADP(+)) from Azoarcus sp. (strain BH72).